The sequence spans 296 residues: Acetylglutamate kinase (296 aa).

Substrate is bound by residues 69-70 (GG), Arg-91, and Asn-193.

The protein belongs to the acetylglutamate kinase family. ArgB subfamily.

The protein resides in the cytoplasm. The enzyme catalyses N-acetyl-L-glutamate + ATP = N-acetyl-L-glutamyl 5-phosphate + ADP. The protein operates within amino-acid biosynthesis; L-arginine biosynthesis; N(2)-acetyl-L-ornithine from L-glutamate: step 2/4. Catalyzes the ATP-dependent phosphorylation of N-acetyl-L-glutamate. In Verminephrobacter eiseniae (strain EF01-2), this protein is Acetylglutamate kinase.